A 586-amino-acid chain; its full sequence is Phosphatase and actin regulator 1 (586 aa).

Positions 62–83 (RRRSKFATLGRLFKPWKWRKKK) match the Nuclear localization signal motif. The RPEL 1 repeat unit spans residues 92-117 (AALERKISMRQSREELIKRGVLKEMY). A disordered region spans residues 373 to 414 (ECEDDKENVPHETSYDDSSCLYSRDEEEDDDDDDDDEDDDSS). The segment covering 397 to 413 (DEEEDDDDDDDDEDDDS) has biased composition (acidic residues). RPEL repeat units follow at residues 428 to 453 (DSLA…PMQT), 466 to 491 (TKLT…KPRN), and 504 to 529 (RRLT…ISFS).

It belongs to the phosphatase and actin regulator family. As to quaternary structure, interacts (via RPEL repeats) with ACTA1.

It is found in the cytoplasm. The protein resides in the synapse. Its subcellular location is the nucleus. Functionally, binds actin monomers (G actin) and plays a role in the reorganization of the actin cytoskeleton and in formation of actin stress fibers. The protein is Phosphatase and actin regulator 1 (phactr1) of Xenopus laevis (African clawed frog).